Here is a 338-residue protein sequence, read N- to C-terminus: UbiA prenyltransferase domain-containing protein 1 (338 aa).

Positions 1-39 (MAAVQAPGEKINIQAGETTQVGDTDQQRNDWPEEDRLPE) are disordered. Alanine 2 carries the post-translational modification N-acetylalanine. Polar residues predominate over residues 15–24 (AGETTQVGDT). Over residues 25–39 (DQQRNDWPEEDRLPE) the composition is skewed to basic and acidic residues. The next 8 helical transmembrane spans lie at 83–103 (LLLG…LVNT), 134–154 (FGVF…YLST), 160–180 (LALI…GIGF), 188–208 (LVIL…VQVG), 209–229 (SLAI…EAIL), 245–267 (IVTL…LLFL), 277–297 (THCS…FSLE), and 315–335 (LNLL…AGSL).

Belongs to the UbiA prenyltransferase family. As to quaternary structure, interacts with HMGCR and SOAT1.

The protein resides in the endoplasmic reticulum membrane. Its subcellular location is the golgi apparatus membrane. It localises to the mitochondrion membrane. It catalyses the reaction menadiol + (2E,6E,10E)-geranylgeranyl diphosphate = menaquinol-4 + diphosphate. It carries out the reaction all-trans-decaprenyl diphosphate + 4-hydroxybenzoate = 4-hydroxy-3-(all-trans-decaprenyl)benzoate + diphosphate. The protein operates within quinol/quinone metabolism; menaquinone biosynthesis. It participates in cofactor biosynthesis; ubiquinone biosynthesis. In terms of biological role, prenyltransferase that mediates the formation of menaquinone-4 (MK-4) and coenzyme Q10. MK-4 is a vitamin K2 isoform required for endothelial cell development. Mediates the conversion of phylloquinone (PK) into MK-4, probably by cleaving the side chain of phylloquinone (PK) to release 2-methyl-1,4-naphthoquinone (menadione; K3) and then prenylating it with geranylgeranyl pyrophosphate (GGPP) to form MK-4. Also plays a role in cardiovascular development independently of MK-4 biosynthesis, by acting as a coenzyme Q10 biosynthetic enzyme: coenzyme Q10, also named ubiquinone, plays an important antioxidant role in the cardiovascular system. Mediates biosynthesis of coenzyme Q10 in the Golgi membrane, leading to protect cardiovascular tissues from NOS3/eNOS-dependent oxidative stress. This is UbiA prenyltransferase domain-containing protein 1 (Ubiad1) from Rattus norvegicus (Rat).